A 154-amino-acid chain; its full sequence is 3-hydroxyacyl-[acyl-carrier-protein] dehydratase FabZ (154 aa).

His-54 is an active-site residue.

The protein belongs to the thioester dehydratase family. FabZ subfamily.

The protein localises to the cytoplasm. The catalysed reaction is a (3R)-hydroxyacyl-[ACP] = a (2E)-enoyl-[ACP] + H2O. Its function is as follows. Involved in unsaturated fatty acids biosynthesis. Catalyzes the dehydration of short chain beta-hydroxyacyl-ACPs and long chain saturated and unsaturated beta-hydroxyacyl-ACPs. In Chlamydia abortus (strain DSM 27085 / S26/3) (Chlamydophila abortus), this protein is 3-hydroxyacyl-[acyl-carrier-protein] dehydratase FabZ.